Here is a 450-residue protein sequence, read N- to C-terminus: Grayanic acid biosynthesis cluster O-methyltransferase (450 aa).

Aspartate 254 contributes to the S-adenosyl-L-methionine binding site. Histidine 301 acts as the Proton acceptor in catalysis.

The protein belongs to the class I-like SAM-binding methyltransferase superfamily. Cation-independent O-methyltransferase family. COMT subfamily.

It functions in the pathway secondary metabolite biosynthesis. Non-reducing polyketide synthase; part of the gene cluster that mediates the biosynthesis of orcinol depsidone grayanic acid (GRA), the only major secondary metabolite known in C.grayi. The first step consists in the ring and depside synthesis by PKS16 leading to 4-O-demethylsphaerophorin, involving different orcinol-like rings, one with acetyl CoA and the other with octanoyl CoA as the starter. Further depsidone formation by the GRA cluster-specific cytochrome P450 leads to 4-O-demethylgrayanic acid. Finally, the cluster specific O-methyltransferase probably converts the 4-O-demethylgrayanic acid into grayanic acid. This chain is Grayanic acid biosynthesis cluster O-methyltransferase, found in Cladonia grayi (Gray's cup lichen).